We begin with the raw amino-acid sequence, 596 residues long: MKQIRNFSIIAHIDHGKSTLSDRLIQVCGGLTDREMDAQVLDSMDLERERGITIKAQSVTLDYKAKDGLVYQLNFIDTPGHVDFSYEVSRSLAACEGALLVVDAGQGVEAQTLANCYTALDMNLDVVPILNKIDLPQADPERVAAEIEDIVGIDAIDAVRCSAKTGVGVDEVLEVIVAKIPPPEGDPNAPLQALIIDSWFDNYLGVVSLVRIKHGSLKKGDKFKVMSTGQNHTADRVGIFTPKQTDKTELKTGEVGFVIAGLKEIHGAPVGDTLTLAKNGAEKPLPGFKKVKPQVYAGVFPISTDEYENFRDALNKLSLNDASLFFEPESSSALGFGFRIGYLGLLHMEIVQERLEREYNLELITTAPTVVYEVVMTSGETIYVDNPSDLPAINNIEEMREPIVEANILVPKEYLGNVITLCIEKRGTQVNMVYHGNQVAVTYHLPMAEVVMDFFDRLKSTSRGYASLEYNFIRFDPADMVRLDILINGDRVDALAMVIHRSNIRHRGLALVDKMKELIPRQMFDIAIQAAVGSQIIARSTVKALRKDVTAKCYGGDVSRKKKLLNKQKEGKKRMKQVGNVEVPQEAFLAVLKLNE.

The tr-type G domain occupies 2 to 184 (KQIRNFSIIA…VIVAKIPPPE (183 aa)). Residues 14–19 (DHGKST) and 131–134 (NKID) each bind GTP.

Belongs to the TRAFAC class translation factor GTPase superfamily. Classic translation factor GTPase family. LepA subfamily.

The protein resides in the cell inner membrane. It carries out the reaction GTP + H2O = GDP + phosphate + H(+). Functionally, required for accurate and efficient protein synthesis under certain stress conditions. May act as a fidelity factor of the translation reaction, by catalyzing a one-codon backward translocation of tRNAs on improperly translocated ribosomes. Back-translocation proceeds from a post-translocation (POST) complex to a pre-translocation (PRE) complex, thus giving elongation factor G a second chance to translocate the tRNAs correctly. Binds to ribosomes in a GTP-dependent manner. The protein is Elongation factor 4 of Shewanella baltica (strain OS223).